Reading from the N-terminus, the 199-residue chain is Melanocortin-2 receptor accessory protein 2B (199 aa).

Asn-6 carries an N-linked (GlcNAc...) asparagine glycan. Residues 39–59 (IVIGFWVGLAVFVIFMFFVLT) form a helical membrane-spanning segment.

It belongs to the MRAP family. As to quaternary structure, interacts with mc4r. Expressed in adult brain.

Its subcellular location is the cell membrane. The protein resides in the endoplasmic reticulum membrane. Its function is as follows. Activator of melanocortin receptor 4 (mc4r), a receptor involved in energy homeostasis. Plays a role after larval development in the control of energy homeostasis and body weight regulation by increasing ligand-sensitivity of mc4r and mc4r-mediated generation of cAMP once the zebrafish begins feeding, increasing the capacity for regulated feeding and growth. The sequence is that of Melanocortin-2 receptor accessory protein 2B (mrap2b) from Danio rerio (Zebrafish).